A 351-amino-acid chain; its full sequence is UDP-N-acetylglucosamine--N-acetylmuramyl-(pentapeptide) pyrophosphoryl-undecaprenol N-acetylglucosamine transferase (351 aa).

UDP-N-acetyl-alpha-D-glucosamine is bound by residues 11 to 13, asparagine 120, arginine 161, serine 187, and glutamine 281; that span reads TGG.

It belongs to the glycosyltransferase 28 family. MurG subfamily.

The protein resides in the cell inner membrane. The catalysed reaction is di-trans,octa-cis-undecaprenyl diphospho-N-acetyl-alpha-D-muramoyl-L-alanyl-D-glutamyl-meso-2,6-diaminopimeloyl-D-alanyl-D-alanine + UDP-N-acetyl-alpha-D-glucosamine = di-trans,octa-cis-undecaprenyl diphospho-[N-acetyl-alpha-D-glucosaminyl-(1-&gt;4)]-N-acetyl-alpha-D-muramoyl-L-alanyl-D-glutamyl-meso-2,6-diaminopimeloyl-D-alanyl-D-alanine + UDP + H(+). It participates in cell wall biogenesis; peptidoglycan biosynthesis. Functionally, cell wall formation. Catalyzes the transfer of a GlcNAc subunit on undecaprenyl-pyrophosphoryl-MurNAc-pentapeptide (lipid intermediate I) to form undecaprenyl-pyrophosphoryl-MurNAc-(pentapeptide)GlcNAc (lipid intermediate II). This is UDP-N-acetylglucosamine--N-acetylmuramyl-(pentapeptide) pyrophosphoryl-undecaprenol N-acetylglucosamine transferase from Rippkaea orientalis (strain PCC 8801 / RF-1) (Cyanothece sp. (strain PCC 8801)).